Consider the following 112-residue polypeptide: MKKVEAIIKPFKLDEVKEALQEAGIQGLSVIEVKGFGRQKGHTELYRGAEYVVDFLPKVKIEMVLPDEMVDIAIEAIVGAARTEKIGDGKIFVSSIEQAIRIRTGETGEDAV.

Tyr51 bears the O-UMP-tyrosine mark.

Belongs to the P(II) protein family. In terms of assembly, homotrimer.

Functionally, P-II indirectly controls the transcription of the glutamine synthetase gene (glnA). P-II prevents NR-II-catalyzed conversion of NR-I to NR-I-phosphate, the transcriptional activator of glnA. When P-II is uridylylated to P-II-UMP, these events are reversed. When the ratio of Gln to 2-ketoglutarate decreases, P-II is uridylylated to P-II-UMP, which causes the deadenylation of glutamine synthetase, so activating the enzyme. The sequence is that of Nitrogen regulatory protein P-II (glnB) from Rhodobacter capsulatus (Rhodopseudomonas capsulata).